The primary structure comprises 273 residues: 2,3,4,5-tetrahydropyridine-2,6-dicarboxylate N-succinyltransferase (273 aa).

The substrate site is built by arginine 104 and aspartate 141.

It belongs to the transferase hexapeptide repeat family. In terms of assembly, homotrimer.

The protein resides in the cytoplasm. The catalysed reaction is (S)-2,3,4,5-tetrahydrodipicolinate + succinyl-CoA + H2O = (S)-2-succinylamino-6-oxoheptanedioate + CoA. It participates in amino-acid biosynthesis; L-lysine biosynthesis via DAP pathway; LL-2,6-diaminopimelate from (S)-tetrahydrodipicolinate (succinylase route): step 1/3. The sequence is that of 2,3,4,5-tetrahydropyridine-2,6-dicarboxylate N-succinyltransferase from Aromatoleum aromaticum (strain DSM 19018 / LMG 30748 / EbN1) (Azoarcus sp. (strain EbN1)).